A 125-amino-acid polypeptide reads, in one-letter code: uncharacterized protein (125 aa).

The chain crosses the membrane as a helical span at residues 10–26 (IIILVCLMFLAIMVYIY).

Its subcellular location is the membrane. This is an uncharacterized protein from Rickettsia prowazekii (strain Madrid E).